Here is a 411-residue protein sequence, read N- to C-terminus: Prophage integrase IntR (411 aa).

One can recognise a Core-binding (CB) domain in the interval 81–176 (KTFGELCDIW…LLCSLLRFAY (96 aa)). In terms of domain architecture, Tyr recombinase spans 197–404 (IKPDPLSKTE…IDDMNDEQIA (208 aa)). Residues Arg-231, Lys-266, Arg-358, and His-381 contribute to the active site. Catalysis depends on Tyr-391, which acts as the O-(3'-phospho-DNA)-tyrosine intermediate.

Belongs to the 'phage' integrase family.

Functionally, integrase is necessary for integration of the phage into the host genome by site-specific recombination. In conjunction with excisionase, integrase is also necessary for excision of the prophage from the host genome. This chain is Prophage integrase IntR (intR), found in Escherichia coli (strain K12).